A 238-amino-acid polypeptide reads, in one-letter code: 2-C-methyl-D-erythritol 4-phosphate cytidylyltransferase (238 aa).

It belongs to the IspD/TarI cytidylyltransferase family. IspD subfamily.

The enzyme catalyses 2-C-methyl-D-erythritol 4-phosphate + CTP + H(+) = 4-CDP-2-C-methyl-D-erythritol + diphosphate. It participates in isoprenoid biosynthesis; isopentenyl diphosphate biosynthesis via DXP pathway; isopentenyl diphosphate from 1-deoxy-D-xylulose 5-phosphate: step 2/6. In terms of biological role, catalyzes the formation of 4-diphosphocytidyl-2-C-methyl-D-erythritol from CTP and 2-C-methyl-D-erythritol 4-phosphate (MEP). In Alteromonas mediterranea (strain DSM 17117 / CIP 110805 / LMG 28347 / Deep ecotype), this protein is 2-C-methyl-D-erythritol 4-phosphate cytidylyltransferase.